Reading from the N-terminus, the 206-residue chain is Tumor protein D54 (206 aa).

M1 is subject to N-acetylmethionine. The span at 1 to 14 (MDSAGQDINLNSPN) shows a compositional bias: polar residues. Residues 1–24 (MDSAGQDINLNSPNKGLLSDSMTD) form a disordered region. Phosphoserine is present on residues S3, S12, S19, and S21. Residues 38-82 (VEGLTEAEEEELRAELTKVEEEIVTLRQVLAAKERHCGELKRRLG) adopt a coiled-coil conformation. 3 positions are modified to phosphoserine: S96, S149, and S161. At T163 the chain carries Phosphothreonine. S166 carries the post-translational modification Phosphoserine. The residue at position 173 (T173) is a Phosphothreonine. The segment covering 175–185 (KSKVVGDRENG) has biased composition (basic and acidic residues). The disordered stretch occupies residues 175–206 (KSKVVGDRENGSDNLPSSAGSGDKPLSDPAPF). Phosphoserine occurs at positions 192 and 195.

This sequence belongs to the TPD52 family. Forms a homodimer or heterodimer with other members of the family. Interacts with MAL2.

The chain is Tumor protein D54 (TPD52L2) from Homo sapiens (Human).